Consider the following 320-residue polypeptide: Serpentine receptor class delta-40 (320 aa).

The next 7 membrane-spanning stretches (helical) occupy residues 12-32 (IFYPIFFIFSTITQLMLIYLI), 42-62 (MLKVFLLNTSLFQIILVVVSC), 95-115 (YQVLQTSAFMSGMSILITFVF), 133-153 (IILLFHMPIIASMVMEVIMVI), 189-209 (LINFLLISGSVVASPFISFFF), 243-263 (AFLPLIFYVPVFGLYFYCILT), and 273-293 (FMTVVPCLPAFFDPMLTLYFV).

The protein belongs to the nematode receptor-like protein srd family.

The protein localises to the membrane. This Caenorhabditis elegans protein is Serpentine receptor class delta-40 (srd-40).